The chain runs to 343 residues: tRNA-specific 2-thiouridylase MnmA (343 aa).

ATP contacts are provided by residues 7–14 and methionine 33; that span reads ALSGGVDS. Catalysis depends on cysteine 87, which acts as the Nucleophile. Cysteines 87 and 184 form a disulfide. Glycine 111 lines the ATP pocket. The interval 135–137 is interaction with tRNA; it reads KDQ. Cysteine 184 functions as the Cysteine persulfide intermediate in the catalytic mechanism. The tract at residues 289 to 290 is interaction with tRNA; sequence RY.

This sequence belongs to the MnmA/TRMU family.

The protein resides in the cytoplasm. It catalyses the reaction S-sulfanyl-L-cysteinyl-[protein] + uridine(34) in tRNA + AH2 + ATP = 2-thiouridine(34) in tRNA + L-cysteinyl-[protein] + A + AMP + diphosphate + H(+). Its function is as follows. Catalyzes the 2-thiolation of uridine at the wobble position (U34) of tRNA, leading to the formation of s(2)U34. The sequence is that of tRNA-specific 2-thiouridylase MnmA from Desulforudis audaxviator (strain MP104C).